The chain runs to 237 residues: uncharacterized protein (237 aa).

Positions 3 to 116 constitute a Response regulatory domain; it reads RILLVEDDER…VVMAKIKSVL (114 aa). Asp52 carries the post-translational modification 4-aspartylphosphate. Residues 131–229 constitute a DNA-binding region (ompR/PhoB-type); sequence SRIVELGGLT…IRGQGYQFQV (99 aa).

In terms of processing, phosphorylated by YvcQ.

The protein localises to the cytoplasm. Member of the two-component regulatory system YvcQ/YvcP. This is an uncharacterized protein from Bacillus subtilis (strain 168).